Consider the following 149-residue polypeptide: D-aminoacyl-tRNA deacylase (149 aa).

The Gly-cisPro motif, important for rejection of L-amino acids motif lies at 137–138 (GP).

Belongs to the DTD family. In terms of assembly, homodimer.

It localises to the cytoplasm. The enzyme catalyses glycyl-tRNA(Ala) + H2O = tRNA(Ala) + glycine + H(+). It carries out the reaction a D-aminoacyl-tRNA + H2O = a tRNA + a D-alpha-amino acid + H(+). An aminoacyl-tRNA editing enzyme that deacylates mischarged D-aminoacyl-tRNAs. Also deacylates mischarged glycyl-tRNA(Ala), protecting cells against glycine mischarging by AlaRS. Acts via tRNA-based rather than protein-based catalysis; rejects L-amino acids rather than detecting D-amino acids in the active site. By recycling D-aminoacyl-tRNA to D-amino acids and free tRNA molecules, this enzyme counteracts the toxicity associated with the formation of D-aminoacyl-tRNA entities in vivo and helps enforce protein L-homochirality. The polypeptide is D-aminoacyl-tRNA deacylase (Thermoanaerobacter sp. (strain X514)).